The following is a 311-amino-acid chain: Probable lipid kinase YegS-like (311 aa).

The region spanning 9 to 140 (EHDGDTWLIL…VDVGTLGDDY (132 aa)) is the DAGKc domain. ATP-binding positions include T47, 73–79 (GDGTVNE), and S102. 3 residues coordinate Mg(2+): K221, D224, and L226. The active-site Proton acceptor is E281.

Belongs to the diacylglycerol/lipid kinase family. YegS lipid kinase subfamily. Requires Mg(2+) as cofactor. Ca(2+) is required as a cofactor.

The protein resides in the cytoplasm. Its function is as follows. Probably phosphorylates lipids; the in vivo substrate is unknown. This is Probable lipid kinase YegS-like from Chromohalobacter salexigens (strain ATCC BAA-138 / DSM 3043 / CIP 106854 / NCIMB 13768 / 1H11).